A 152-amino-acid polypeptide reads, in one-letter code: UPF0266 membrane protein Ent638_2389 (152 aa).

3 consecutive transmembrane segments (helical) span residues 6–26, 45–65, and 67–87; these read IVLV…EFIM, VDAF…VMSQ, and ALLT…LFWI.

It belongs to the UPF0266 family.

It is found in the cell inner membrane. This is UPF0266 membrane protein Ent638_2389 from Enterobacter sp. (strain 638).